Here is a 363-residue protein sequence, read N- to C-terminus: MSHISPIPEILADIKAGKMVIITDAEDRENEGDLLMAAQFVTPEAINFMIKHARGLVCLPMDGEMVEKLGLPMMTQKNGAQYGTNFTVSIEAAHGITTGISAADRALTIQTAVSPTAKPEDIVQPGHIFPLRAQKGGVLVRAGHTEAGVDLAQMNGLIPASVICEIINDDGTMARMPELMKFAEEHKLKIGTIADLIEYRSRTESLLEDMGNAPVQTPWGEFQQHVYVDKLSGETHLALVKGTPAADTETLVRVHEPFSVMDFIQANPRHSWSLPKALEHIQQAESGVVILLHRTEDGASLLDRTLPKGANQAYKWDSKSYGIGAQILAGLNVKKLRVLGQPSSFTGLTGFGLEVVGFEEAEK.

The tract at residues 1 to 202 (MSHISPIPEI…IADLIEYRSR (202 aa)) is DHBP synthase. D-ribulose 5-phosphate is bound by residues 28 to 29 (RE), D33, 141 to 145 (RAGHT), and E165. E29 contacts Mg(2+). H144 contributes to the Mg(2+) binding site. A GTP cyclohydrolase II-like region spans residues 205 to 363 (SLLEDMGNAP…EVVGFEEAEK (159 aa)).

This sequence in the N-terminal section; belongs to the DHBP synthase family. The protein in the C-terminal section; belongs to the GTP cyclohydrolase II family. Mg(2+) is required as a cofactor. It depends on Mn(2+) as a cofactor.

The enzyme catalyses D-ribulose 5-phosphate = (2S)-2-hydroxy-3-oxobutyl phosphate + formate + H(+). It participates in cofactor biosynthesis; riboflavin biosynthesis; 2-hydroxy-3-oxobutyl phosphate from D-ribulose 5-phosphate: step 1/1. Its function is as follows. Catalyzes the conversion of D-ribulose 5-phosphate to formate and 3,4-dihydroxy-2-butanone 4-phosphate. This Neisseria meningitidis serogroup B (strain ATCC BAA-335 / MC58) protein is 3,4-dihydroxy-2-butanone 4-phosphate synthase (ribB).